Here is a 1087-residue protein sequence, read N- to C-terminus: Platelet-derived growth factor receptor alpha (1087 aa).

The N-terminal stretch at 1–24 is a signal peptide; that stretch reads MMPAMRASLILGCLLIIGPWAILA. Residues 25–530 lie on the Extracellular side of the membrane; sequence ENPLPTIFPD…PTLRSELTVA (506 aa). Ig-like C2-type domains lie at 27–114 and 118–211; these read PLPT…SEIE and IYIY…LQTW. A disulfide bridge connects residues C50 and C101. N-linked (GlcNAc...) asparagine glycosylation is found at N77 and N104. A disulfide bridge connects residues C151 and C192. N216, N282, N309, N356, N362, N461, and N471 each carry an N-linked (GlcNAc...) asparagine glycan. Ig-like C2-type domains are found at residues 217–309, 315–409, and 417–519; these read ISVE…KKTN, KGFI…KSYS, and PALI…LKLV. A disulfide bridge links C238 with C293. A disulfide bridge connects residues C438 and C503. Residues 531–551 form a helical membrane-spanning segment; the sequence is AAVLVLLVIVIISLIVLVIIW. Over 552-1087 the chain is Cytoplasmic; that stretch reads KQKPRYEIRW…SSDLVEDSFL (536 aa). A phosphotyrosine; by autocatalysis mark is found at Y574 and Y576. Positions 595–970 constitute a Protein kinase domain; the sequence is LVLGRILGSG…CYETVLHDFL (376 aa). ATP contacts are provided by residues 601 to 609 and K629; that span reads LGSGAFGKV. 5 positions are modified to phosphotyrosine; by autocatalysis: Y722, Y733, Y744, Y756, and Y764. The Proton acceptor role is filled by D818. Phosphotyrosine; by autocatalysis is present on residues Y849, Y988, and Y1017. Positions 1017-1064 are disordered; that stretch reads YIIPLPDIDPVSEDESGKRNRHSSQTSEESAIETGSSSSTFIKRDDET. The span at 1039 to 1057 shows a compositional bias: polar residues; sequence SSQTSEESAIETGSSSSTF.

This sequence belongs to the protein kinase superfamily. Tyr protein kinase family. CSF-1/PDGF receptor subfamily. In terms of assembly, interacts with homodimeric pdgfa, pdgfb and pdgfc, and with heterodimers formed by pdgfa and pdgfb. Monomer in the absence of bound ligand. Interaction with dimeric pdgfa, pdgfb and/or pdgfc leads to receptor dimerization, where both pdgfra homodimers and heterodimers with pdgfrb are observed. In terms of processing, ubiquitinated, leading to its internalization and degradation. Autophosphorylated on tyrosine residues upon ligand binding. Autophosphorylation occurs in trans, i.e. one subunit of the dimeric receptor phosphorylates tyrosine residues on the other subunit.

The protein resides in the cell membrane. Its subcellular location is the cell projection. It localises to the cilium. The protein localises to the golgi apparatus. It catalyses the reaction L-tyrosyl-[protein] + ATP = O-phospho-L-tyrosyl-[protein] + ADP + H(+). With respect to regulation, present in an inactive conformation in the absence of bound ligand. Binding of pdgfa and/or pdgfb leads to dimerization and activation by autophosphorylation on tyrosine residues. Tyrosine-protein kinase that acts as a cell-surface receptor for pdgfa, pdgfb and pdgfc and plays an essential role in the regulation of embryonic development, cell proliferation, survival and chemotaxis. Depending on the context, promotes or inhibits cell proliferation and cell migration. Plays an important role in the differentiation of bone marrow-derived mesenchymal stem cells. Required for normal skeleton development. Required for normal development of the gastrointestinal tract. Plays a role in cell migration and chemotaxis in wound healing. Plays a role in platelet activation, secretion of agonists from platelet granules, and in thrombin-induced platelet aggregation. Binding of its cognate ligands - homodimeric pdgfa, homodimeric pdgfb, heterodimers formed by pdgfa and pdgfb or homodimeric pdgfc -leads to the activation of several signaling cascades; the response depends on the nature of the bound ligand and is modulated by the formation of heterodimers between pdgfra and pdgfrb. Phosphorylates pik3r1, plcg1, and ptpn11. Activation of plcg1 leads to the production of the cellular signaling molecules diacylglycerol and inositol 1,4,5-trisphosphate, mobilization of cytosolic Ca(2+) and the activation of protein kinase C. Phosphorylates pik3r1, the regulatory subunit of phosphatidylinositol 3-kinase, and thereby mediates activation of the akt1 signaling pathway. Mediates activation of hras and of the MAP kinases mapk1/erk2 and/or mapk3/erk1. Promotes activation of stat family members stat1, stat3 and stat5a and/or stat5b. Receptor signaling is down-regulated by protein phosphatases that dephosphorylate the receptor and its down-stream effectors, and by rapid internalization of the activated receptor. The chain is Platelet-derived growth factor receptor alpha (pdgfra) from Xenopus laevis (African clawed frog).